A 126-amino-acid polypeptide reads, in one-letter code: Aspartate 1-decarboxylase (126 aa).

Ser-25 serves as the catalytic Schiff-base intermediate with substrate; via pyruvic acid. A Pyruvic acid (Ser) modification is found at Ser-25. Thr-57 is a binding site for substrate. Tyr-58 serves as the catalytic Proton donor. 73-75 (GAA) provides a ligand contact to substrate.

It belongs to the PanD family. In terms of assembly, heterooctamer of four alpha and four beta subunits. Requires pyruvate as cofactor. In terms of processing, is synthesized initially as an inactive proenzyme, which is activated by self-cleavage at a specific serine bond to produce a beta-subunit with a hydroxyl group at its C-terminus and an alpha-subunit with a pyruvoyl group at its N-terminus.

Its subcellular location is the cytoplasm. It catalyses the reaction L-aspartate + H(+) = beta-alanine + CO2. Its pathway is cofactor biosynthesis; (R)-pantothenate biosynthesis; beta-alanine from L-aspartate: step 1/1. In terms of biological role, catalyzes the pyruvoyl-dependent decarboxylation of aspartate to produce beta-alanine. This chain is Aspartate 1-decarboxylase, found in Chromohalobacter salexigens (strain ATCC BAA-138 / DSM 3043 / CIP 106854 / NCIMB 13768 / 1H11).